The sequence spans 196 residues: Adenylate kinase (196 aa).

9–17 (GIPGVGKST) contacts ATP.

This sequence belongs to the archaeal adenylate kinase family.

It is found in the cytoplasm. The enzyme catalyses AMP + ATP = 2 ADP. This chain is Adenylate kinase (adkA), found in Pyrococcus horikoshii (strain ATCC 700860 / DSM 12428 / JCM 9974 / NBRC 100139 / OT-3).